Reading from the N-terminus, the 245-residue chain is MAAAIASSLIRQKRQAREREKSNACKCVSSPSKGKTSCDKNKLNVFSRVKLFGSKKRRRRRPEPQLKGIVTKLYSRQGYHLQLQADGTIDGTKDEDSTYTLFNLIPVGLRVVAIQGVQTKLYLAMNSEGYLYTSEHFTPECKFKESVFENYYVTYSSMIYRQQQSGRGWYLGLNKEGEIMKGNHVKKNKPAAHFLPKPLKVAMYKEPSLHDLTEFSRSGSGTPTKSRSVSGVLNGGKSMSHNEST.

A disordered region spans residues 1 to 36 (MAAAIASSLIRQKRQAREREKSNACKCVSSPSKGKT). The tract at residues 1–62 (MAAAIASSLI…GSKKRRRRRP (62 aa)) is mediates targeting to the nucleus. Residues 67–201 (KGIVTKLYSR…AHFLPKPLKV (135 aa)) are mediates interaction with sodium channels. The tubulin-binding domain necessary and sufficient for tubulin-binding stretch occupies residues 157–164 (SMIYRQQQ). The residue at position 208 (Ser-208) is a Phosphoserine. The tract at residues 213 to 245 (TEFSRSGSGTPTKSRSVSGVLNGGKSMSHNEST) is disordered. Residues 215–245 (FSRSGSGTPTKSRSVSGVLNGGKSMSHNEST) show a composition bias toward polar residues.

The protein belongs to the heparin-binding growth factors family. In terms of assembly, interacts with SCN8A; regulates SCN8A activity. Interacts with SCN1A; may regulate SCN1A activity. Interacts with SCN5A; the interaction is direct and may regulate SNC5A density at membranes and function. May also interact with SCN2A and SCN11A. Interacts with MAPK8IP2; may regulate the MAPK8IP2 scaffolding activity. May be phosphorylated. In terms of tissue distribution, detected in brain, eye and heart. In brain, the different isoforms display different patterns of expression. Expressed in brain and heart (at protein level). Isoform 3 is highly expressed in cardiac myocytes while isoform 1 is the most abundant in brain.

Its subcellular location is the cell projection. It is found in the filopodium. The protein localises to the growth cone. The protein resides in the dendrite. It localises to the cell membrane. Its subcellular location is the sarcolemma. It is found in the cytoplasm. The protein localises to the nucleus. Microtubule-binding protein which directly binds tubulin and is involved in both polymerization and stabilization of microtubules. Through its action on microtubules, may participate to the refinement of axons by negatively regulating axonal and leading processes branching. Plays a crucial role in neuron polarization and migration in the cerebral cortex and the hippocampus. Regulates voltage-gated sodium channel transport and function. May also play a role in MAPK signaling. Required for the development of axonal initial segment-targeting inhibitory GABAergic synapses made by chandelier neurons. Functionally, seems not to be involved in neuroblast polarization and migration but regulates axon branching. In Mus musculus (Mouse), this protein is Fibroblast growth factor 13.